A 1071-amino-acid polypeptide reads, in one-letter code: DNA-directed RNA polymerase subunit beta (1071 aa).

This sequence belongs to the RNA polymerase beta chain family. As to quaternary structure, in plastids the minimal PEP RNA polymerase catalytic core is composed of four subunits: alpha, beta, beta', and beta''. When a (nuclear-encoded) sigma factor is associated with the core the holoenzyme is formed, which can initiate transcription.

The protein resides in the plastid. The protein localises to the chloroplast. It catalyses the reaction RNA(n) + a ribonucleoside 5'-triphosphate = RNA(n+1) + diphosphate. Functionally, DNA-dependent RNA polymerase catalyzes the transcription of DNA into RNA using the four ribonucleoside triphosphates as substrates. In Panax ginseng (Korean ginseng), this protein is DNA-directed RNA polymerase subunit beta.